We begin with the raw amino-acid sequence, 850 residues long: Pierisin (850 aa).

Ricin B-type lectin domains follow at residues 267–409, 413–560, and 564–707; these read GEFM…WNII, FRPI…WDIK, and YQYV…WYLK.

The protein belongs to the pierisin ADP-ribosyltransferase family.

The catalysed reaction is a 2'-deoxyguanosine in DNA + NAD(+) = an N(2)-(ADP-L-ribosyl)-2'-deoxyguanosine in DNA + nicotinamide + H(+). In terms of biological role, ADP-ribosylates double-stranded DNA by targeting the N2 amino group of dG residues. Induces apoptosis in a range of human cell lines. May play a role in destroying cells during pupation and/or defense against parasites. The polypeptide is Pierisin (Pieris brassicae (White butterfly)).